Consider the following 419-residue polypeptide: UDP-N-acetylglucosamine 1-carboxyvinyltransferase (419 aa).

Position 22–23 (22–23 (KN)) interacts with phosphoenolpyruvate. Residue Arg-91 coordinates UDP-N-acetyl-alpha-D-glucosamine. Catalysis depends on Cys-115, which acts as the Proton donor. The residue at position 115 (Cys-115) is a 2-(S-cysteinyl)pyruvic acid O-phosphothioketal. UDP-N-acetyl-alpha-D-glucosamine-binding positions include 120-124 (RPVDL), 160-163 (KVSV), Asp-305, and Ile-327.

The protein belongs to the EPSP synthase family. MurA subfamily.

The protein resides in the cytoplasm. It carries out the reaction phosphoenolpyruvate + UDP-N-acetyl-alpha-D-glucosamine = UDP-N-acetyl-3-O-(1-carboxyvinyl)-alpha-D-glucosamine + phosphate. It participates in cell wall biogenesis; peptidoglycan biosynthesis. In terms of biological role, cell wall formation. Adds enolpyruvyl to UDP-N-acetylglucosamine. The chain is UDP-N-acetylglucosamine 1-carboxyvinyltransferase from Klebsiella pneumoniae (strain 342).